The following is a 238-amino-acid chain: CBS domain-containing protein CBSX2, chloroplastic (238 aa).

A chloroplast-targeting transit peptide spans 1–71 (MGSISLSNSM…ASVNNNNSVP (71 aa)). 2 CBS domains span residues 83 to 145 (MTPR…QNDT) and 177 to 234 (MTPS…KRET).

It is found in the plastid. The protein localises to the chloroplast stroma. This Arabidopsis thaliana (Mouse-ear cress) protein is CBS domain-containing protein CBSX2, chloroplastic (CBSX2).